Here is a 706-residue protein sequence, read N- to C-terminus: Probable cyclic nucleotide-gated ion channel 3 (706 aa).

Residues 1–85 (MMNPQRNKFV…NDSYLQSWNK (85 aa)) lie on the Cytoplasmic side of the membrane. Residues 86 to 106 (IFLLLSVVALAFDPLFFYIPY) traverse the membrane as a helical segment. The Extracellular portion of the chain corresponds to 107 to 119 (VKPERFCLNLDKK). The chain crosses the membrane as a helical span at residues 120–140 (LQTIACVFRTFIDAFYVVHML). Topologically, residues 141-174 (FQFHTGFITPSSSGFGRGELNEKHKDIALRYLGS) are cytoplasmic. A helical membrane pass occupies residues 175–195 (YFLIDLLSILPIPQVVVLAIV). Over 196 to 208 (PRMRRPASLVAKE) the chain is Extracellular. Residues 209 to 229 (LLKWVIFCQYVPRIARIYPLF) form a helical membrane-spanning segment. Over 230 to 247 (KEVTRTSGLVTETAWAGA) the chain is Cytoplasmic. The chain crosses the membrane as a helical span at residues 248–268 (ALNLFLYMLASHVFGSFWYLI). Topologically, residues 269–371 (SIERKDRCWR…QNLKTSAFEG (103 aa)) are extracellular. Residues 372-392 (EIIFAIVICISGLVLFALLIG) traverse the membrane as a helical segment. The Cytoplasmic portion of the chain corresponds to 393–706 (NMQKYLQSTT…ADPEFPMDET (314 aa)). Residues 477 to 600 (WFQA…KQLR) and D548 contribute to the a nucleoside 3',5'-cyclic phosphate site. A calmodulin-binding region spans residues 591 to 606 (YRRLHSKQLRHMFRFY). An IQ domain is found at 611–640 (QTWAACFIQAAWKRHCRRKLSKALREEEGK).

It belongs to the cyclic nucleotide-gated cation channel (TC 1.A.1.5) family. In terms of assembly, homotetramer or heterotetramer.

It is found in the cell membrane. Probable cyclic nucleotide-gated ion channel. The chain is Probable cyclic nucleotide-gated ion channel 3 (CNGC3) from Arabidopsis thaliana (Mouse-ear cress).